A 401-amino-acid chain; its full sequence is MAEVLRWLRLDLGQSGGLAWERLDWRLALTVLALAGLGLVMVGSASVSIAEGATGDPLHYLYRQAVFLAVALMAAVACLHLSLDQFYRGGPVLLVLGFFLLLVVLIPGVGREVNGATRWIPLGLINLQVAEVARVCFIIYLAGYCVRRHAELPNTSSAFAVPLAVFSLAAVLLLAQPDFGTALVLMATALGLLFLAGASLWRIGVLGLLLAGAAWLLIVGSPYRWQRLTTFTDPWADPFNAGFQLTQSLIAIGRGEWFGVGLGASVQKLFYLPEAHTDFLFAVLAEELGLLGVVVVVALFTYLAWRGMQIGLASLRADRPFGAYLAWGLTISIGLQAFINMAVTMGLLPTKGLTLPLMSYGGSSLIMTGIALALLLRVDYEARLAAQQPRPRKRPSGRVRP.

Topologically, residues 1-26 (MAEVLRWLRLDLGQSGGLAWERLDWR) are cytoplasmic. The chain crosses the membrane as a helical span at residues 27–47 (LALTVLALAGLGLVMVGSASV). Residues 48 to 65 (SIAEGATGDPLHYLYRQA) lie on the Periplasmic side of the membrane. The chain crosses the membrane as a helical span at residues 66–86 (VFLAVALMAAVACLHLSLDQF). Over 87 to 88 (YR) the chain is Cytoplasmic. The helical transmembrane segment at 89-109 (GGPVLLVLGFFLLLVVLIPGV) threads the bilayer. Residues 110–118 (GREVNGATR) are Periplasmic-facing. The chain crosses the membrane as a helical span at residues 119-139 (WIPLGLINLQVAEVARVCFII). Over 140–154 (YLAGYCVRRHAELPN) the chain is Cytoplasmic. The helical transmembrane segment at 155–175 (TSSAFAVPLAVFSLAAVLLLA) threads the bilayer. The Periplasmic segment spans residues 176–180 (QPDFG). The helical transmembrane segment at 181-201 (TALVLMATALGLLFLAGASLW) threads the bilayer. Residue Arg-202 is a topological domain, cytoplasmic. A helical transmembrane segment spans residues 203–223 (IGVLGLLLAGAAWLLIVGSPY). Topologically, residues 224–278 (RWQRLTTFTDPWADPFNAGFQLTQSLIAIGRGEWFGVGLGASVQKLFYLPEAHTD) are periplasmic. Residues 279–299 (FLFAVLAEELGLLGVVVVVAL) form a helical membrane-spanning segment. Over 300–322 (FTYLAWRGMQIGLASLRADRPFG) the chain is Cytoplasmic. Residues 323 to 343 (AYLAWGLTISIGLQAFINMAV) traverse the membrane as a helical segment. Over 344 to 354 (TMGLLPTKGLT) the chain is Periplasmic. The chain crosses the membrane as a helical span at residues 355-375 (LPLMSYGGSSLIMTGIALALL). Residues 376–401 (LRVDYEARLAAQQPRPRKRPSGRVRP) are Cytoplasmic-facing.

Belongs to the SEDS family. FtsW subfamily.

It is found in the cell inner membrane. It carries out the reaction [GlcNAc-(1-&gt;4)-Mur2Ac(oyl-L-Ala-gamma-D-Glu-L-Lys-D-Ala-D-Ala)](n)-di-trans,octa-cis-undecaprenyl diphosphate + beta-D-GlcNAc-(1-&gt;4)-Mur2Ac(oyl-L-Ala-gamma-D-Glu-L-Lys-D-Ala-D-Ala)-di-trans,octa-cis-undecaprenyl diphosphate = [GlcNAc-(1-&gt;4)-Mur2Ac(oyl-L-Ala-gamma-D-Glu-L-Lys-D-Ala-D-Ala)](n+1)-di-trans,octa-cis-undecaprenyl diphosphate + di-trans,octa-cis-undecaprenyl diphosphate + H(+). Its pathway is cell wall biogenesis; peptidoglycan biosynthesis. Its function is as follows. Peptidoglycan polymerase that is essential for cell division. This Alkalilimnicola ehrlichii (strain ATCC BAA-1101 / DSM 17681 / MLHE-1) protein is Probable peptidoglycan glycosyltransferase FtsW.